Consider the following 409-residue polypeptide: Mitochondrial inner membrane protein oxa1-2 (409 aa).

The chain crosses the membrane as a helical span at residues 76–96 (VVYTPSLPLSSSVLASFSFLP). Residues 97-114 (HNILQNGLNTLHIWSGLP) are Mitochondrial intermembrane-facing. A helical transmembrane segment spans residues 115–135 (WWASIAACAVAMRIAVFPIML). The Mitochondrial matrix portion of the chain corresponds to 136 to 188 (KMMKTSAKLAIINPKVAEHMSVLSKAKAEGNSELMMQATTQIQNLYKVNNVNP). A helical membrane pass occupies residues 189-209 (LNLLSAPVFQGILFISFFYAL). Residues 210–235 (KTMAGVPVEGFTDGGFWWVNDLSQPD) lie on the Mitochondrial intermembrane side of the membrane. Residues 236–256 (PLHIFPVANGLLMLLNIELGS) traverse the membrane as a helical segment. The Mitochondrial matrix segment spans residues 257-275 (ETGSNKVAMSPSMKKFFRF). A helical transmembrane segment spans residues 276 to 296 (LCLASPLFTMNFPMAIFMYWF). Over 297–409 (PSNVFSVFQG…SVTKPTEKKD (113 aa)) the chain is Mitochondrial intermembrane. The tract at residues 369–409 (TDTNNEQKPTNNSTITKATTLSDNSQNDKSSSVTKPTEKKD) is disordered. Residues 374-403 (EQKPTNNSTITKATTLSDNSQNDKSSSVTK) are compositionally biased toward polar residues.

This sequence belongs to the OXA1/ALB3/YidC family.

The protein resides in the mitochondrion inner membrane. Functionally, required for the insertion of integral membrane proteins into the mitochondrial inner membrane. Essential for the activity and assembly of cytochrome c oxidase. It is essential for viability while oxa101 is not. When both are deleted the cell is non-viable, suggesting that oxa101 act as a back-up for oxa102. The polypeptide is Mitochondrial inner membrane protein oxa1-2 (oxa102) (Schizosaccharomyces pombe (strain 972 / ATCC 24843) (Fission yeast)).